A 173-amino-acid polypeptide reads, in one-letter code: Alpha-crystallin A chain (173 aa).

Residue M1 is modified to N-acetylmethionine. Residues 1–63 form a required for complex formation with BFSP1 and BFSP2 region; it reads MDIAIQHPWF…RSVLDSGISE (63 aa). Q6 carries the deamidated glutamine; partial modification. Phosphoserine is present on S45. Q50 carries the deamidated glutamine; partial modification. The region spanning 52–162 is the sHSP domain; that stretch reads VFRSVLDSGI…GHSERAIPVS (111 aa). K70 and K99 each carry N6-acetyllysine. Position 100 (H100) interacts with Zn(2+). N101 bears the Deamidated asparagine; partial mark. Positions 102 and 107 each coordinate Zn(2+). At S122 the chain carries Phosphoserine. Residue N123 is modified to Deamidated asparagine; partial. Residues 144-173 are disordered; it reads PKVPSGVDAGHSERAIPVSREEKPSSAPSS. Residues 153 to 167 show a composition bias toward basic and acidic residues; sequence GHSERAIPVSREEKP. H154 lines the Zn(2+) pocket. Residue S162 is glycosylated (O-linked (GlcNAc) serine).

The protein belongs to the small heat shock protein (HSP20) family. As to quaternary structure, heteromer composed of three CRYAA and one CRYAB subunits. Inter-subunit bridging via zinc ions enhances stability, which is crucial as there is no protein turn over in the lens. Can also form homodimers and homotetramers (dimers of dimers) which serve as the building blocks of homooligomers. Within homooligomers, the zinc-binding motif is created from residues of 3 different molecules. His-100 and Glu-102 from one molecule are ligands of the zinc ion, and His-107 and His-154 residues from additional molecules complete the site with tetrahedral coordination geometry. Part of a complex required for lens intermediate filament formation composed of BFSP1, BFSP2 and CRYAA. Acetylation at Lys-70 may increase chaperone activity. Post-translationally, undergoes age-dependent proteolytical cleavage at the C-terminus.

The protein localises to the cytoplasm. Its subcellular location is the nucleus. In terms of biological role, contributes to the transparency and refractive index of the lens. Acts as a chaperone, preventing aggregation of various proteins under a wide range of stress conditions. Required for the correct formation of lens intermediate filaments as part of a complex composed of BFSP1, BFSP2 and CRYAA. The polypeptide is Alpha-crystallin A chain (CRYAA) (Halichoerus grypus (Gray seal)).